Reading from the N-terminus, the 121-residue chain is Large ribosomal subunit protein uL18 (121 aa).

The protein belongs to the universal ribosomal protein uL18 family. Part of the 50S ribosomal subunit; part of the 5S rRNA/L5/L18/L25 subcomplex. Contacts the 5S and 23S rRNAs.

This is one of the proteins that bind and probably mediate the attachment of the 5S RNA into the large ribosomal subunit, where it forms part of the central protuberance. This Ehrlichia canis (strain Jake) protein is Large ribosomal subunit protein uL18.